Here is a 150-residue protein sequence, read N- to C-terminus: uncharacterized protein (150 aa).

This is an uncharacterized protein from Acidianus bottle-shaped virus (isolate Italy/Pozzuoli) (ABV).